The sequence spans 136 residues: uncharacterized protein (136 aa).

The interval 1-33 (MRDHLPPGLPPDPFADDPCDPSAALEAVEPGQP) is disordered.

It to M.leprae ML0386.

This is an uncharacterized protein from Mycobacterium tuberculosis (strain CDC 1551 / Oshkosh).